A 305-amino-acid polypeptide reads, in one-letter code: tRNA pseudouridine synthase B (305 aa).

D39 serves as the catalytic Nucleophile.

Belongs to the pseudouridine synthase TruB family. Type 1 subfamily.

It catalyses the reaction uridine(55) in tRNA = pseudouridine(55) in tRNA. Responsible for synthesis of pseudouridine from uracil-55 in the psi GC loop of transfer RNAs. This chain is tRNA pseudouridine synthase B, found in Staphylococcus saprophyticus subsp. saprophyticus (strain ATCC 15305 / DSM 20229 / NCIMB 8711 / NCTC 7292 / S-41).